Reading from the N-terminus, the 451-residue chain is Serine--tRNA ligase (451 aa).

258–260 lines the L-serine pocket; that stretch reads TSE. Position 289–291 (289–291) interacts with ATP; it reads RSE. Position 312 (Glu-312) interacts with L-serine. 376–379 is a binding site for ATP; sequence EISS. L-serine is bound at residue Ser-411.

Belongs to the class-II aminoacyl-tRNA synthetase family. Type-1 seryl-tRNA synthetase subfamily. In terms of assembly, homodimer. The tRNA molecule binds across the dimer.

The protein resides in the cytoplasm. It carries out the reaction tRNA(Ser) + L-serine + ATP = L-seryl-tRNA(Ser) + AMP + diphosphate + H(+). It catalyses the reaction tRNA(Sec) + L-serine + ATP = L-seryl-tRNA(Sec) + AMP + diphosphate + H(+). The protein operates within aminoacyl-tRNA biosynthesis; selenocysteinyl-tRNA(Sec) biosynthesis; L-seryl-tRNA(Sec) from L-serine and tRNA(Sec): step 1/1. In terms of biological role, catalyzes the attachment of serine to tRNA(Ser). Is also able to aminoacylate tRNA(Sec) with serine, to form the misacylated tRNA L-seryl-tRNA(Sec), which will be further converted into selenocysteinyl-tRNA(Sec). The polypeptide is Serine--tRNA ligase (Bordetella bronchiseptica (strain ATCC BAA-588 / NCTC 13252 / RB50) (Alcaligenes bronchisepticus)).